The sequence spans 112 residues: Nucleoid-associated protein FTH_1374 (112 aa).

The interval 1–27 (MNFDMSKLMQQAQKMQEQMKKAQQERE) is disordered. Residues 17 to 27 (EQMKKAQQERE) are compositionally biased toward basic and acidic residues.

Belongs to the YbaB/EbfC family. As to quaternary structure, homodimer.

Its subcellular location is the cytoplasm. It is found in the nucleoid. Its function is as follows. Binds to DNA and alters its conformation. May be involved in regulation of gene expression, nucleoid organization and DNA protection. This is Nucleoid-associated protein FTH_1374 from Francisella tularensis subsp. holarctica (strain OSU18).